Reading from the N-terminus, the 415-residue chain is Serine hydroxymethyltransferase (415 aa).

Residues Leu-121 and 125–127 (GHL) contribute to the (6S)-5,6,7,8-tetrahydrofolate site. Lys-230 carries the N6-(pyridoxal phosphate)lysine modification. Residues Glu-246 and 354–356 (SPF) contribute to the (6S)-5,6,7,8-tetrahydrofolate site.

It belongs to the SHMT family. Homodimer. It depends on pyridoxal 5'-phosphate as a cofactor.

It localises to the cytoplasm. It carries out the reaction (6R)-5,10-methylene-5,6,7,8-tetrahydrofolate + glycine + H2O = (6S)-5,6,7,8-tetrahydrofolate + L-serine. It participates in one-carbon metabolism; tetrahydrofolate interconversion. Its pathway is amino-acid biosynthesis; glycine biosynthesis; glycine from L-serine: step 1/1. Functionally, catalyzes the reversible interconversion of serine and glycine with tetrahydrofolate (THF) serving as the one-carbon carrier. This reaction serves as the major source of one-carbon groups required for the biosynthesis of purines, thymidylate, methionine, and other important biomolecules. Also exhibits THF-independent aldolase activity toward beta-hydroxyamino acids, producing glycine and aldehydes, via a retro-aldol mechanism. The polypeptide is Serine hydroxymethyltransferase (Bdellovibrio bacteriovorus (strain ATCC 15356 / DSM 50701 / NCIMB 9529 / HD100)).